Consider the following 133-residue polypeptide: ATP synthase epsilon chain (133 aa).

The protein belongs to the ATPase epsilon chain family. F-type ATPases have 2 components, CF(1) - the catalytic core - and CF(0) - the membrane proton channel. CF(1) has five subunits: alpha(3), beta(3), gamma(1), delta(1), epsilon(1). CF(0) has three main subunits: a, b and c.

The protein localises to the cell membrane. Produces ATP from ADP in the presence of a proton gradient across the membrane. This Geobacillus thermodenitrificans (strain NG80-2) protein is ATP synthase epsilon chain.